Reading from the N-terminus, the 713-residue chain is Protein-glucosylgalactosylhydroxylysine glucosidase (713 aa).

Residues 1 to 21 form the signal peptide; sequence MIINSQEYLQPPQWWNERVEA. N-linked (GlcNAc...) asparagine glycans are attached at residues Asn104, Asn160, Asn171, Asn186, and Asn283. 317–318 is a substrate binding site; sequence WD. A glycan (N-linked (GlcNAc...) asparagine) is linked at Asn361. The Proton donor role is filled by Glu451. Asn457 and Asn481 each carry an N-linked (GlcNAc...) asparagine glycan. 521–522 is a substrate binding site; sequence KQ. Residues Asn535, Asn576, and Asn662 are each glycosylated (N-linked (GlcNAc...) asparagine).

Belongs to the glycosyl hydrolase 65 family.

It localises to the secreted. The enzyme catalyses (5R)-5-O-[alpha-D-glucosyl-(1-&gt;2)-beta-D-galactosyl]-5-hydroxy-L-lysyl-[collagen] + H2O = (5R)-5-O-(beta-D-galactosyl)-5-hydroxy-L-lysyl-[collagen] + D-glucose. Catalyzes the hydrolysis of glucose from the disaccharide unit linked to hydroxylysine residues of collagen and collagen-like proteins. The polypeptide is Protein-glucosylgalactosylhydroxylysine glucosidase (Dictyostelium discoideum (Social amoeba)).